The sequence spans 124 residues: Alpha-amylase inhibitor 0.53 (124 aa).

4 disulfides stabilise this stretch: Cys-20/Cys-41, Cys-28/Cys-83, Cys-42/Cys-99, and Cys-54/Cys-115.

This sequence belongs to the protease inhibitor I6 (cereal trypsin/alpha-amylase inhibitor) family. As to quaternary structure, homodimer. Post-translationally, the disulfide bonds are essential for the inhibitor activity. In terms of tissue distribution, endosperm.

Its subcellular location is the secreted. Its function is as follows. Alpha-amylase inhibitor. This Triticum aestivum (Wheat) protein is Alpha-amylase inhibitor 0.53.